The primary structure comprises 52 residues: Sperm protamine P1 (52 aa).

Residues 1-27 (MARYSCCRSHSRSRSRRRRQRCRRRRR) are disordered. Positions 9 to 27 (SHSRSRSRRRRQRCRRRRR) are enriched in basic residues.

It belongs to the protamine P1 family. Testis.

It is found in the nucleus. It localises to the chromosome. In terms of biological role, protamines substitute for histones in the chromatin of sperm during the haploid phase of spermatogenesis. They compact sperm DNA into a highly condensed, stable and inactive complex. The polypeptide is Sperm protamine P1 (PRM1) (Rhinolophus ferrumequinum (Greater horseshoe bat)).